Consider the following 428-residue polypeptide: D-amino acid dehydrogenase (428 aa).

3–17 (VVILGSGVVGVASAY) contributes to the FAD binding site.

It belongs to the DadA oxidoreductase family. FAD serves as cofactor.

The catalysed reaction is a D-alpha-amino acid + A + H2O = a 2-oxocarboxylate + AH2 + NH4(+). The protein operates within amino-acid degradation; D-alanine degradation; NH(3) and pyruvate from D-alanine: step 1/1. Its function is as follows. Oxidative deamination of D-amino acids. The sequence is that of D-amino acid dehydrogenase from Burkholderia pseudomallei (strain 1106a).